We begin with the raw amino-acid sequence, 215 residues long: Cytochrome b6 (215 aa).

The helical transmembrane segment at 32–52 (IFYCLGGITLTCFLVQVATGF) threads the bilayer. Cys-35 contributes to the heme c binding site. Heme b contacts are provided by His-86 and His-100. Helical transmembrane passes span 90-110 (ASMM…TGGF), 116-136 (LTWV…VTGY), and 186-206 (LHTF…FLMI). Residues His-187 and His-202 each contribute to the heme b site.

Belongs to the cytochrome b family. PetB subfamily. As to quaternary structure, the 4 large subunits of the cytochrome b6-f complex are cytochrome b6, subunit IV (17 kDa polypeptide, PetD), cytochrome f and the Rieske protein, while the 4 small subunits are PetG, PetL, PetM and PetN. The complex functions as a dimer. Heme b is required as a cofactor. It depends on heme c as a cofactor.

Its subcellular location is the plastid. It localises to the chloroplast thylakoid membrane. Functionally, component of the cytochrome b6-f complex, which mediates electron transfer between photosystem II (PSII) and photosystem I (PSI), cyclic electron flow around PSI, and state transitions. The chain is Cytochrome b6 from Ostreococcus tauri.